The sequence spans 275 residues: Large ribosomal subunit protein uL2 (275 aa).

Positions Arg-28–Ser-38 are enriched in basic and acidic residues. Disordered regions lie at residues Arg-28–His-58 and Val-223–Lys-275. A compositionally biased stretch (basic residues) spans Lys-254–Lys-275.

It belongs to the universal ribosomal protein uL2 family. As to quaternary structure, part of the 50S ribosomal subunit. Forms a bridge to the 30S subunit in the 70S ribosome.

One of the primary rRNA binding proteins. Required for association of the 30S and 50S subunits to form the 70S ribosome, for tRNA binding and peptide bond formation. It has been suggested to have peptidyltransferase activity; this is somewhat controversial. Makes several contacts with the 16S rRNA in the 70S ribosome. The sequence is that of Large ribosomal subunit protein uL2 from Chromohalobacter salexigens (strain ATCC BAA-138 / DSM 3043 / CIP 106854 / NCIMB 13768 / 1H11).